We begin with the raw amino-acid sequence, 515 residues long: Cytochrome P450 2D7 (515 aa).

The Extracellular segment spans residues methionine 1 to glycine 2. The helical transmembrane segment at leucine 3 to methionine 23 threads the bilayer. The Cytoplasmic segment spans residues histidine 24–asparagine 301. The chain crosses the membrane as a helical span at residues leucine 302 to isoleucine 322. The Extracellular portion of the chain corresponds to leucine 323–arginine 515. Asparagine 416 carries N-linked (GlcNAc...) asparagine glycosylation. Heme is bound at residue cysteine 461.

It belongs to the cytochrome P450 family. The cofactor is heme. As to expression, expressed in brain cortex (at protein level).

Its subcellular location is the membrane. It is found in the cytoplasm. The protein localises to the mitochondrion. It carries out the reaction an organic molecule + reduced [NADPH--hemoprotein reductase] + O2 = an alcohol + oxidized [NADPH--hemoprotein reductase] + H2O + H(+). Its function is as follows. May be responsible for the metabolism of many drugs and environmental chemicals that it oxidizes. It may be involved in the metabolism of codeine to morphine. However, another study could not confirm it. The protein is Cytochrome P450 2D7 of Homo sapiens (Human).